The following is a 533-amino-acid chain: Solute carrier family 2, facilitated glucose transporter member 2 (533 aa).

At 1–17 (MDGKSKMQAEKHLTGTL) the chain is on the cytoplasmic side. The helical transmembrane segment at 18–38 (VLSVFTAVLGFFQYGYSLGVI) threads the bilayer. Residues 39-110 (NAPQKVIEAH…SPHILTMYWS (72 aa)) lie on the Extracellular side of the membrane. N-linked (GlcNAc...) asparagine glycans are attached at residues Asn64 and Asn69. A helical membrane pass occupies residues 111 to 131 (LSVSMFAVGGMVSSFTVGWIG). At 132-136 (DRLGR) the chain is on the cytoplasmic side. A helical membrane pass occupies residues 137-157 (VKAMLVVNVLSIAGNLLMGLA). Residues 158 to 163 (KMGPSH) lie on the Extracellular side of the membrane. The chain crosses the membrane as a helical span at residues 164-184 (ILIIAGRAITGLYCGLSSGLV). The Cytoplasmic segment spans residues 185-199 (PMYVSEVSPTALRGA). The chain crosses the membrane as a helical span at residues 200 to 220 (LGTLHQLAIVTGILISQVLGL). Position 205 (Gln205) interacts with D-glucose. At 221–229 (DFLLGNDEL) the chain is on the extracellular side. A helical membrane pass occupies residues 230 to 250 (WPLLLGLSGVAALLQFFLLLL). Residues 251–315 (CPESPRYLYI…LFSSSKYRQA (65 aa)) are Cytoplasmic-facing. A helical membrane pass occupies residues 316-336 (VIVALMVQISQQFSGINAIFY). D-glucose-binding positions include 326 to 327 (QQ) and Asn332. The Extracellular portion of the chain corresponds to 337–350 (YSTNIFQRAGVGQP). A helical transmembrane segment spans residues 351–371 (VYATIGVGVVNTVFTVISVFL). D-glucose is bound at residue Asn361. Topologically, residues 372–379 (VEKAGRRS) are cytoplasmic. A helical transmembrane segment spans residues 380-400 (LFLAGLMGMLISAVAMTVGLV). Residues 401–413 (LLSQFAWMSYVSM) lie on the Extracellular side of the membrane. The chain crosses the membrane as a helical span at residues 414–434 (VAIFLFVIFFEVGPGPIPWFI). The D-glucose site is built by Glu424 and Trp432. Topologically, residues 435 to 445 (VAELFSQGPRP) are cytoplasmic. Residues 446–466 (AAIAVAGFCNWACNFIVGMCF) form a helical membrane-spanning segment. At 467–471 (QYIAD) the chain is on the extracellular side. Residues 472–492 (LCGPYVFVVFAVLLLVFFLFA) traverse the membrane as a helical segment. Residues 493–533 (YLKVPETKGKSFEEIAAAFRRKKLPAKSMTELEDLRGGEEA) lie on the Cytoplasmic side of the membrane.

It belongs to the major facilitator superfamily. Sugar transporter (TC 2.A.1.1) family. Glucose transporter subfamily.

It is found in the cell membrane. It catalyses the reaction D-glucose(out) = D-glucose(in). The enzyme catalyses D-fructose(out) = D-fructose(in). It carries out the reaction L-dehydroascorbate(out) = L-dehydroascorbate(in). The catalysed reaction is D-galactose(in) = D-galactose(out). D-glucose and maltose competitively inhibit fructose transport. D-glucose, D-fructose and maltose inhibit deoxyglucose transport. Functionally, facilitative hexose transporter that mediates the transport of glucose, fructose and galactose. Likely mediates the bidirectional transfer of glucose across the plasma membrane of hepatocytes and is responsible for uptake of glucose by the beta cells. The polypeptide is Solute carrier family 2, facilitated glucose transporter member 2 (Gallus gallus (Chicken)).